The primary structure comprises 616 residues: Tumor necrosis factor receptor superfamily member 11A (616 aa).

An N-terminal signal peptide occupies residues 1–29 (MAPRARRRRPLFALLLLCALLARLQVALQ). At 30-212 (IAPPCTSEKH…PPNEPHVYLP (183 aa)) the chain is on the extracellular side. 9 disulfides stabilise this stretch: cysteine 34-cysteine 46, cysteine 47-cysteine 60, cysteine 50-cysteine 68, cysteine 71-cysteine 86, cysteine 92-cysteine 112, cysteine 114-cysteine 127, cysteine 124-cysteine 126, cysteine 133-cysteine 151, and cysteine 154-cysteine 169. 4 TNFR-Cys repeats span residues 34-68 (CTSE…DSVC), 71-112 (CGPD…PRRC), 114-151 (CTAG…DTVC), and 154-194 (CLAG…DAVC). Asparagine 105 carries N-linked (GlcNAc...) asparagine glycosylation. Na(+) contacts are provided by cysteine 133, alanine 134, and serine 160. Asparagine 174 carries an N-linked (GlcNAc...) asparagine glycan. A disulfide bond links cysteine 175 and cysteine 194. The helical transmembrane segment at 213–233 (GLIILLLFASVALVAAIIFGV) threads the bilayer. Residues 234–616 (CYRKKGKALT…PVQEQGGAKA (383 aa)) are Cytoplasmic-facing. The segment at 468–536 (PLPQCAYGMG…GNSNSTFISS (69 aa)) is disordered. The span at 483–493 (EASRTEARDQP) shows a compositional bias: basic and acidic residues. The span at 499–508 (GRLPSSARAG) shows a compositional bias: low complexity. The span at 524 to 536 (NVTGNSNSTFISS) shows a compositional bias: polar residues. The interval 544–549 (GDIIVV) is required for interaction with EEIG1 and osteoclast differentiation. Positions 556–616 (QEGAAAAAEP…PVQEQGGAKA (61 aa)) are disordered. Positions 570–580 (VQEETLARRDS) are enriched in basic and acidic residues. Serine 580 carries the post-translational modification Phosphoserine.

In terms of assembly, binds to the clefts between the subunits of the TNFSF11 ligand trimer to form a heterohexamer. Part of a complex composed of EEIG1, TNFRSF11A/RANK, PLCG2, GAB2, TEC and BTK; complex formation increases in the presence of TNFSF11/RANKL. Interacts with TRAF1, TRAF2, TRAF3, TRAF5 and TRAF6. Interacts (via cytoplasmic domain) with GAB2. Interacts (via cytoplasmic domain); with EEIG1 (via N-terminus); when in the presence of TNFSF11/RANKL. Ubiquitous expression with high levels in skeletal muscle, thymus, liver, colon, small intestine and adrenal gland.

The protein localises to the cell membrane. It localises to the membrane raft. Its function is as follows. Receptor for TNFSF11/RANKL/TRANCE/OPGL; essential for RANKL-mediated osteoclastogenesis. Its interaction with EEIG1 promotes osteoclastogenesis via facilitating the transcription of NFATC1 and activation of PLCG2. Involved in the regulation of interactions between T-cells and dendritic cells. The sequence is that of Tumor necrosis factor receptor superfamily member 11A (TNFRSF11A) from Homo sapiens (Human).